The primary structure comprises 87 residues: HssA/B-like protein 28 (87 aa).

This sequence belongs to the hssA/B family.

The chain is HssA/B-like protein 28 (hssl28) from Dictyostelium discoideum (Social amoeba).